The chain runs to 197 residues: Large ribosomal subunit protein eL15 (197 aa).

A disordered region spans residues leucine 175–arginine 197.

It belongs to the eukaryotic ribosomal protein eL15 family.

In Thermoplasma volcanium (strain ATCC 51530 / DSM 4299 / JCM 9571 / NBRC 15438 / GSS1), this protein is Large ribosomal subunit protein eL15 (rpl15e).